A 491-amino-acid chain; its full sequence is Acetyl-coenzyme A carboxylase carboxyl transferase subunit beta, chloroplastic (491 aa).

A CoA carboxyltransferase N-terminal domain is found at leucine 224 to lysine 491. 4 residues coordinate Zn(2+): cysteine 228, cysteine 231, cysteine 247, and cysteine 250. The segment at cysteine 228–cysteine 250 adopts a C4-type zinc-finger fold.

The protein belongs to the AccD/PCCB family. As to quaternary structure, acetyl-CoA carboxylase is a heterohexamer composed of biotin carboxyl carrier protein, biotin carboxylase and 2 subunits each of ACCase subunit alpha and ACCase plastid-coded subunit beta (accD). Zn(2+) is required as a cofactor.

It localises to the plastid. The protein resides in the chloroplast stroma. It carries out the reaction N(6)-carboxybiotinyl-L-lysyl-[protein] + acetyl-CoA = N(6)-biotinyl-L-lysyl-[protein] + malonyl-CoA. It functions in the pathway lipid metabolism; malonyl-CoA biosynthesis; malonyl-CoA from acetyl-CoA: step 1/1. Functionally, component of the acetyl coenzyme A carboxylase (ACC) complex. Biotin carboxylase (BC) catalyzes the carboxylation of biotin on its carrier protein (BCCP) and then the CO(2) group is transferred by the transcarboxylase to acetyl-CoA to form malonyl-CoA. The chain is Acetyl-coenzyme A carboxylase carboxyl transferase subunit beta, chloroplastic from Vitis vinifera (Grape).